A 103-amino-acid polypeptide reads, in one-letter code: CLAVATA3/ESR (CLE)-related protein 22 (103 aa).

The first 34 residues, 1–34, serve as a signal peptide directing secretion; it reads MGNYYSRRKSRKHITTVALIILLLLLFLFLYAKA. Residues 37 to 103 are disordered; the sequence is SSPNIHHHST…FTGPNPLHNR (67 aa). Over residues 41 to 50 the composition is skewed to basic residues; sequence IHHHSTHGSL. Over residues 66-76 the composition is skewed to polar residues; sequence NAASSRGSKYT. Pro97 carries the post-translational modification Hydroxyproline. O-linked (Ara...) hydroxyproline glycosylation is present at Pro97.

This sequence belongs to the CLV3/ESR signal peptide family. In terms of processing, the O-glycosylation (arabinosylation) of the hydroxyproline Pro-97 enhances binding affinity of the CLE22p peptide for its receptor. As to expression, mostly expressed in stems and apex, and, to a lower extent, in seedlings, leaves, flowers and siliques.

The protein localises to the secreted. Its subcellular location is the extracellular space. Extracellular signal peptide that regulates cell fate. Represses root apical meristem maintenance. The protein is CLAVATA3/ESR (CLE)-related protein 22 of Arabidopsis thaliana (Mouse-ear cress).